Reading from the N-terminus, the 320-residue chain is N-acetylneuraminate lyase (320 aa).

Thr-51 and Thr-52 together coordinate aceneuramate. Catalysis depends on Tyr-143, which acts as the Proton donor. Residue Lys-173 is the Schiff-base intermediate with substrate of the active site. Aceneuramate contacts are provided by Thr-175, Gly-199, Asp-201, Glu-202, and Ser-218. A Phosphoserine modification is found at Ser-308.

Belongs to the DapA family. NanA subfamily. Homotetramer.

The protein localises to the cytoplasm. The catalysed reaction is aceneuramate = aldehydo-N-acetyl-D-mannosamine + pyruvate. It participates in amino-sugar metabolism; N-acetylneuraminate degradation. Catalyzes the cleavage of N-acetylneuraminic acid (sialic acid) to form pyruvate and N-acetylmannosamine via a Schiff base intermediate. It prevents sialic acids from being recycled and returning to the cell surface. Involved in the N-glycolylneuraminic acid (Neu5Gc) degradation pathway. The polypeptide is N-acetylneuraminate lyase (Mus musculus (Mouse)).